The sequence spans 445 residues: Phosphoglucosamine mutase (445 aa).

Serine 101 functions as the Phosphoserine intermediate in the catalytic mechanism. Mg(2+) is bound by residues serine 101, aspartate 240, aspartate 242, and aspartate 244. Position 101 is a phosphoserine (serine 101).

This sequence belongs to the phosphohexose mutase family. Mg(2+) serves as cofactor. Post-translationally, activated by phosphorylation.

It carries out the reaction alpha-D-glucosamine 1-phosphate = D-glucosamine 6-phosphate. Functionally, catalyzes the conversion of glucosamine-6-phosphate to glucosamine-1-phosphate. The chain is Phosphoglucosamine mutase from Ectopseudomonas mendocina (strain ymp) (Pseudomonas mendocina).